We begin with the raw amino-acid sequence, 542 residues long: Chaperonin GroEL (542 aa).

Residues 29–32 (TMGP), 86–90 (DGTTT), Gly-413, 476–478 (NAA), and Asp-492 contribute to the ATP site. The tract at residues 521-542 (KPDPNANNQAPAAPQGGMGGMM) is disordered. The segment covering 524-535 (PNANNQAPAAPQ) has biased composition (low complexity).

Belongs to the chaperonin (HSP60) family. Forms a cylinder of 14 subunits composed of two heptameric rings stacked back-to-back. Interacts with the co-chaperonin GroES.

It localises to the cytoplasm. It catalyses the reaction ATP + H2O + a folded polypeptide = ADP + phosphate + an unfolded polypeptide.. Functionally, together with its co-chaperonin GroES, plays an essential role in assisting protein folding. The GroEL-GroES system forms a nano-cage that allows encapsulation of the non-native substrate proteins and provides a physical environment optimized to promote and accelerate protein folding. The protein is Chaperonin GroEL of Limosilactobacillus reuteri subsp. reuteri (strain JCM 1112) (Lactobacillus reuteri).